Here is a 388-residue protein sequence, read N- to C-terminus: Chorismate synthase (388 aa).

Residues Arg-39 and Arg-45 each contribute to the NADP(+) site. FMN-binding positions include 132 to 134, 251 to 252, Gly-296, 311 to 315, and Arg-337; these read RSS, NA, and KPIPT.

Belongs to the chorismate synthase family. In terms of assembly, homotetramer. FMNH2 is required as a cofactor.

The enzyme catalyses 5-O-(1-carboxyvinyl)-3-phosphoshikimate = chorismate + phosphate. It participates in metabolic intermediate biosynthesis; chorismate biosynthesis; chorismate from D-erythrose 4-phosphate and phosphoenolpyruvate: step 7/7. Its function is as follows. Catalyzes the anti-1,4-elimination of the C-3 phosphate and the C-6 proR hydrogen from 5-enolpyruvylshikimate-3-phosphate (EPSP) to yield chorismate, which is the branch point compound that serves as the starting substrate for the three terminal pathways of aromatic amino acid biosynthesis. This reaction introduces a second double bond into the aromatic ring system. This is Chorismate synthase from Staphylococcus aureus (strain COL).